We begin with the raw amino-acid sequence, 3132 residues long: Enniatin synthetase (3132 aa).

The interval 53–466 (ADDKQRAVGH…VEKVDMMTQE (414 aa)) is condensation 1. The interval 186–212 (NDEHPRQFETPDSSQATPEEDLQPNPS) is disordered. The interval 495-887 (SQSPNKAAVA…GRMDSQVKIR (393 aa)) is adenylation 1. The tract at residues 994–1013 (SQKTHSTPSQQSQAAISSGT) is disordered. Residues 1010-1086 (SSGTDTETKL…GLKAIVIGTS (77 aa)) form the Carrier 1 domain. The residue at position 1047 (Ser-1047) is an O-(pantetheine 4'-phosphoryl)serine. Residues 1105 to 1534 (SYAQNRMWFL…ETCISVLPLT (430 aa)) form a condensation 2 region. The tract at residues 1563 to 1960 (FREQAAANPE…GRMDNQFKIR (398 aa)) is adenylation 2. The interval 2021-2177 (EGWQDHFESG…YLAEVIDGLI (157 aa)) is S-adenosyl-L-methionine-dependent N-methyltransferase. Carrier domains follow at residues 2504-2578 (FPIS…RQGL) and 2598-2672 (APRT…ESSH). Residues Ser-2538 and Ser-2632 each carry the O-(pantetheine 4'-phosphoryl)serine modification. The interval 2719–3124 (QDVYPSTQMQ…RHVLEEVCKT (406 aa)) is condensation 3.

This sequence belongs to the NRP synthetase family. Pantetheine 4'-phosphate serves as cofactor.

It functions in the pathway antibiotic biosynthesis; enniatin biosynthesis. Functionally, nonribosomal peptide synthetase that synthesizes enniatin by coupling three D-hydroxycarboxylic acids and three L-amino acids via amide and ester bonds in an alternating fashion. Whereas ESYN1 can accept different amino acids as precursors (L-valine, L-isoleucine or L-leucine), only one species of D-hydroxycarboxylic acid can be found in natural enniatin isolates (D-hydroxyisovaleric acid, D-Hiv). D-Hiv stems from L-valine deanimation by a valine aminotransferase to 2-keto-isovaleric acid (2-Kiv), which becomes subsequently reduced by a keto-isovaleric acid reductase (KivR) to D-Hiv. This is Enniatin synthetase from Fusarium oxysporum (Fusarium vascular wilt).